The primary structure comprises 876 residues: MSSSSVSGIREAFLDFFEKQGHTRYPSAPLIAEGDASLLFTNAGMVPFKQRFITGVSDVKTATTSQKCLRAGGKHNDLENVGYTNRHHTFFEMLGNFSFGDYFKETAIELAWRFVTKELGLSKERLWITVYSEDQEAFDIWKKITGYTDHKIIRISTSDNFWSMGDTGPCGPCSEIFYDYGDGVPGGLPGTDESDGARYTEIWNLVFMQYNRDESGELHKLPRGCIDTGMGLERIAAVMQGVCDNYETDMFQAIIDRSRSIFGSHDHPIAHRVIADHVRAASFLIAEGLTPGNEGRNYVLRRIIRRAVRYIYQIVGDKFSLHEVVPVLTREGSAGYMGNAYPEIVKAEQSIVSTLKIEEDGFADTLRRGTGILEQEIRGLKSGEVLSGEIAFKLYDTYGFPLDITLDVAKERGLKFDEDGFNRCMAKQKEQSRKHWKGSGEAQTASSHILNKHKATSFVGYENHRVKSMVKEIFCSGEAVTSMGEGEEGIAVLDITPFYAESGGQEGDTGLLKVVTTKCGSVAEVVDTTKSNNVHLHKIRVIRGTLKVGDVVEAVVDKQRREKLRANHSATHILQSVLRTLIGEGIQQKGSLVAADKLRFDFSHALPLTKEQLRTVEMEVNRQIMANQPVIIDHCSLEDAVQEGAIALFGEKYNDQNVRVVSMGSSKELCGGTHVRFTGDIGAFRIISETGIAQGVRRIEAITGHEVVSSMNRDSESLQQVAECLSVPVDQVIEKLKKVFVEQREINKKMATICYTHMNSCAKCIEVGSEIKLYVGEFSNIPVEVVASYVKEKMHTNEVLAISTTDGKRTTFIVGVGESAIKRIKATDIVKALQQIQGKGGGNASIARASLPSEYSAKAAEIIRQTVIDAIQNSGA.

Residues His568, His572, Cys670, and His674 each coordinate Zn(2+).

Belongs to the class-II aminoacyl-tRNA synthetase family. Requires Zn(2+) as cofactor.

The protein localises to the cytoplasm. It catalyses the reaction tRNA(Ala) + L-alanine + ATP = L-alanyl-tRNA(Ala) + AMP + diphosphate. Catalyzes the attachment of alanine to tRNA(Ala) in a two-step reaction: alanine is first activated by ATP to form Ala-AMP and then transferred to the acceptor end of tRNA(Ala). Also edits incorrectly charged Ser-tRNA(Ala) and Gly-tRNA(Ala) via its editing domain. This chain is Alanine--tRNA ligase, found in Anaplasma phagocytophilum (strain HZ).